A 736-amino-acid polypeptide reads, in one-letter code: Elongation factor 2 (736 aa).

The tr-type G domain occupies 18–234 (TRVRNIGIIA…VIDAYTASDK (217 aa)). GTP is bound by residues 27–34 (AHVDHGKT), 93–97 (DTPGH), and 147–150 (NKVD). A Diphthamide modification is found at His603.

It belongs to the TRAFAC class translation factor GTPase superfamily. Classic translation factor GTPase family. EF-G/EF-2 subfamily.

Its subcellular location is the cytoplasm. Its function is as follows. Catalyzes the GTP-dependent ribosomal translocation step during translation elongation. During this step, the ribosome changes from the pre-translocational (PRE) to the post-translocational (POST) state as the newly formed A-site-bound peptidyl-tRNA and P-site-bound deacylated tRNA move to the P and E sites, respectively. Catalyzes the coordinated movement of the two tRNA molecules, the mRNA and conformational changes in the ribosome. This chain is Elongation factor 2, found in Saccharolobus islandicus (strain Y.N.15.51 / Yellowstone #2) (Sulfolobus islandicus).